The following is a 207-amino-acid chain: Ribonuclease HII (207 aa).

In terms of domain architecture, RNase H type-2 spans 18 to 207 (TYLSGSDEAG…PIKKISKETS (190 aa)). A divalent metal cation-binding residues include aspartate 24, glutamate 25, and aspartate 116.

It belongs to the RNase HII family. The cofactor is Mn(2+). Mg(2+) is required as a cofactor.

The protein localises to the cytoplasm. It carries out the reaction Endonucleolytic cleavage to 5'-phosphomonoester.. In terms of biological role, endonuclease that specifically degrades the RNA of RNA-DNA hybrids. The chain is Ribonuclease HII from Mycoplasma mycoides subsp. mycoides SC (strain CCUG 32753 / NCTC 10114 / PG1).